We begin with the raw amino-acid sequence, 87 residues long: DNA-directed RNA polymerase subunit omega (87 aa).

It belongs to the RNA polymerase subunit omega family. As to quaternary structure, the RNAP catalytic core consists of 2 alpha, 1 beta, 1 beta' and 1 omega subunit. When a sigma factor is associated with the core the holoenzyme is formed, which can initiate transcription.

The catalysed reaction is RNA(n) + a ribonucleoside 5'-triphosphate = RNA(n+1) + diphosphate. In terms of biological role, promotes RNA polymerase assembly. Latches the N- and C-terminal regions of the beta' subunit thereby facilitating its interaction with the beta and alpha subunits. In Pseudomonas fluorescens (strain ATCC BAA-477 / NRRL B-23932 / Pf-5), this protein is DNA-directed RNA polymerase subunit omega.